Reading from the N-terminus, the 238-residue chain is N-terminal acetyltransferase A complex catalytic subunit ARD1 (238 aa).

In terms of domain architecture, N-acetyltransferase spans Tyr35–Lys195.

This sequence belongs to the acetyltransferase family. ARD1 subfamily. In terms of assembly, component of the N-terminal acetyltransferase A (NatA) complex, which is composed of ARD1, NAT1 and NAT5. Can self-associate.

It localises to the cytoplasm. The catalysed reaction is N-terminal glycyl-[protein] + acetyl-CoA = N-terminal N(alpha)-acetylglycyl-[protein] + CoA + H(+). It carries out the reaction N-terminal L-alanyl-[protein] + acetyl-CoA = N-terminal N(alpha)-acetyl-L-alanyl-[protein] + CoA + H(+). The enzyme catalyses N-terminal L-seryl-[protein] + acetyl-CoA = N-terminal N(alpha)-acetyl-L-seryl-[protein] + CoA + H(+). It catalyses the reaction N-terminal L-valyl-[protein] + acetyl-CoA = N-terminal N(alpha)-acetyl-L-valyl-[protein] + CoA + H(+). The catalysed reaction is N-terminal L-cysteinyl-[protein] + acetyl-CoA = N-terminal N(alpha)-acetyl-L-cysteinyl-[protein] + CoA + H(+). It carries out the reaction N-terminal L-threonyl-[protein] + acetyl-CoA = N-terminal N(alpha)-acetyl-L-threonyl-[protein] + CoA + H(+). In terms of biological role, catalytic component of the NatA N-terminal acetyltransferase, which catalyzes acetylation of proteins beginning with Met-Ser, Met-Gly and Met-Ala. N-acetylation plays a role in normal eukaryotic translation and processing, protect against proteolytic degradation and protein turnover. The chain is N-terminal acetyltransferase A complex catalytic subunit ARD1 (ARD1) from Saccharomyces cerevisiae (strain ATCC 204508 / S288c) (Baker's yeast).